Consider the following 157-residue polypeptide: AP-1 complex subunit sigma-2 (157 aa).

The protein belongs to the adaptor complexes small subunit family. Adaptor protein complex 1 (AP-1) is a heterotetramer composed of two large adaptins (gamma-type subunit AP1G1 and beta-type subunit AP1B1), a medium adaptin (mu-type subunit AP1M1 or AP1M2) and a small adaptin (sigma-type subunit AP1S1 or AP1S2 or AP1S3). Binds to MUC1. As to expression, widely expressed.

Its subcellular location is the golgi apparatus. It localises to the cytoplasmic vesicle membrane. It is found in the membrane. The protein resides in the clathrin-coated pit. Subunit of clathrin-associated adaptor protein complex 1 that plays a role in protein sorting in the late-Golgi/trans-Golgi network (TGN) and/or endosomes. The AP complexes mediate both the recruitment of clathrin to membranes and the recognition of sorting signals within the cytosolic tails of transmembrane cargo molecules. The protein is AP-1 complex subunit sigma-2 (AP1S2) of Homo sapiens (Human).